The following is a 510-amino-acid chain: Histone deacetylase 3 (510 aa).

The histone deacetylase stretch occupies residues 24 to 338; it reads RRVCYFYDPE…WCYETGVALG (315 aa). The active-site Proton donor/acceptor is the His-158. Zn(2+) contacts are provided by Asp-193, His-195, and Asp-281. The segment at 394–510 is disordered; sequence PSVQFQERIP…ARNEPGSSPK (117 aa). Basic and acidic residues-rich tracts occupy residues 418–434 and 448–472; these read DERH…DHKP and VKRE…HKGP. The span at 485 to 503 shows a compositional bias: low complexity; it reads APTADANAVAVNAPGNARN.

Belongs to the histone deacetylase family. HD Type 1 subfamily. Zn(2+) serves as cofactor. As to expression, expressed in roots.

The protein resides in the nucleus. The catalysed reaction is N(6)-acetyl-L-lysyl-[histone] + H2O = L-lysyl-[histone] + acetate. In terms of biological role, responsible for the deacetylation of lysine residues on the N-terminal part of the core histones (H2A, H2B, H3 and H4). Histone deacetylation gives a tag for epigenetic repression and plays an important role in transcriptional regulation, cell cycle progression and developmental events. Histone deacetylases act via the formation of large multiprotein complexes. The sequence is that of Histone deacetylase 3 from Oryza sativa subsp. japonica (Rice).